The sequence spans 331 residues: uncharacterized protein (331 aa).

This is an uncharacterized protein from Orgyia pseudotsugata (Douglas-fir tussock moth).